A 64-amino-acid chain; its full sequence is U-scoloptoxin(14)-Er1a (64 aa).

The N-terminal stretch at 1 to 23 (MRPSFPLLLIMLLVCTAHHMVSG) is a signal peptide.

Belongs to the scoloptoxin-14 family. In terms of processing, contains 4 disulfide bonds. In terms of tissue distribution, expressed by the venom gland.

The protein resides in the secreted. The chain is U-scoloptoxin(14)-Er1a from Ethmostigmus rubripes (Giant centipede).